The primary structure comprises 295 residues: AP-1-like transcription factor YAP4 (295 aa).

Phosphoserine is present on residues Ser85, Ser89, and Ser196. The segment covering 181–202 (ASYFPSNSTPATRKNSATTNLP) has biased composition (polar residues). Positions 181–205 (ASYFPSNSTPATRKNSATTNLPSEE) are disordered. The bZIP domain maps to 237–295 (PLRNTKRAAQNRSAQKAFRQRREKYIKNLEEKSKLFDGLMKENSELKKMIESLKSKLKE). Positions 239–260 (RNTKRAAQNRSAQKAFRQRREK) are basic motif. The segment at 262–271 (IKNLEEKSKL) is leucine-zipper.

Belongs to the bZIP family. YAP subfamily. As to quaternary structure, homodimer.

The protein localises to the cytoplasm. It localises to the nucleus. Functionally, transcription activator involved in the regulation of genes expressed in response to environmental changes and metabolic requirements. According to genome-wide promoter binding and gene expression studies it regulates, among others, genes involved in ribosome biogenesis, and protein synthesis. It may also be involved in pleiotropic drug resistance. When overexpressed it confers increased resistance to cisplatin, the DNA-alkylating agents methylmethanosulfonate, and mitomycin C, the antimalarial drugs quinidine, mefloquine, and chloroquine, and increases cellular tolerance to sodium and lithium. Preferentially binds 5'-TTACTAA-3'. This Saccharomyces cerevisiae (strain ATCC 204508 / S288c) (Baker's yeast) protein is AP-1-like transcription factor YAP4 (CIN5).